Here is a 326-residue protein sequence, read N- to C-terminus: Interleukin-1-binding protein (326 aa).

An N-terminal signal peptide occupies residues 1–18 (MSILPVIFLSIFFYSSFV). Ig-like domains are found at residues 24 to 115 (PECI…LNLT), 122 to 212 (SNID…RIVK), and 221 to 322 (PSTM…KTVT). Cys-48 and Cys-99 form a disulfide bridge. Asn-80, Asn-103, and Asn-113 each carry an N-linked (GlcNAc...) asparagine; by host glycan. Cys-143 and Cys-194 are disulfide-bonded. N-linked (GlcNAc...) asparagine; by host glycans are attached at residues Asn-206 and Asn-237. Cys-242 and Cys-309 are joined by a disulfide.

The protein belongs to the interleukin-1 receptor family. Interacts with mouse Il1b.

The protein localises to the secreted. Its function is as follows. May reduce the host inflammatory response by interacting with inteleukin-1 beta (Il1b) and thus decreasing the association between IL1B and its cellular receptor. The polypeptide is Interleukin-1-binding protein (OPG201) (Vaccinia virus (strain Western Reserve) (VACV)).